A 215-amino-acid polypeptide reads, in one-letter code: Cytochrome b-c1 complex subunit Rieske, mitochondrial (215 aa).

A mitochondrion-targeting transit peptide spans 1-22 (MLGIRSSVKTCFKPMSLTSKRL). A propeptide spans 23–30 (ISQSLLAS) (removed in mature form). Residues 31–50 (KSTYRTPNFDDVLKENNDAD) are Mitochondrial matrix-facing. The helical transmembrane segment at 51-80 (KGRSYAYFMVGAMGLLSSAGAKSTVETFIS) threads the bilayer. At 81–215 (SMTATADVLA…EFDGDKVIVG (135 aa)) the chain is on the mitochondrial intermembrane side. Positions 90 to 93 (AMAK) are hinge. In terms of domain architecture, Rieske spans 123–214 (PHEIQEANSV…YEFDGDKVIV (92 aa)). Positions 159, 161, 178, and 181 each coordinate [2Fe-2S] cluster. A disulfide bridge links C164 with C180.

Belongs to the Rieske iron-sulfur protein family. Component of the ubiquinol-cytochrome c oxidoreductase (cytochrome b-c1 complex, complex III, CIII), a multisubunit enzyme composed of 10 subunits. The complex is composed of 3 respiratory subunits cytochrome b (COB), cytochrome c1 (CYT1) and Rieske protein (RIP1), 2 core protein subunits COR1 and QCR2, and 5 low-molecular weight protein subunits QCR6, QCR7, QCR8, QCR9 and QCR10. The complex exists as an obligatory dimer and forms supercomplexes (SCs) in the inner mitochondrial membrane with a monomer or a dimer of cytochrome c oxidase (complex IV, CIV), resulting in 2 different assemblies (supercomplexes III(2)IV and III(2)IV(2)). RIP1 interacts with QCR10 on the intermembrane space (IMS) side, and with QCR9. The cofactor is [2Fe-2S] cluster. Post-translationally, processed by both the mitochondrial processing peptidase (MPP) and the mitochondrial intermediate protease (MIP). Initially, MPP removes 22 amino acids from the newly imported precursor in the mitochondrial matrix. This proteolytic processing is then followed by a second proteolytic cleavage by MIP, which removes an octapeptide to generate mature-sized RIP1.

Its subcellular location is the mitochondrion inner membrane. It carries out the reaction a quinol + 2 Fe(III)-[cytochrome c](out) = a quinone + 2 Fe(II)-[cytochrome c](out) + 2 H(+)(out). In terms of biological role, component of the ubiquinol-cytochrome c oxidoreductase, a multisubunit transmembrane complex that is part of the mitochondrial electron transport chain which drives oxidative phosphorylation. The respiratory chain contains 3 multisubunit complexes succinate dehydrogenase (complex II, CII), ubiquinol-cytochrome c oxidoreductase (cytochrome b-c1 complex, complex III, CIII) and cytochrome c oxidase (complex IV, CIV), that cooperate to transfer electrons derived from NADH and succinate to molecular oxygen, creating an electrochemical gradient over the inner membrane that drives transmembrane transport and the ATP synthase. The cytochrome b-c1 complex catalyzes electron transfer from ubiquinol to cytochrome c, linking this redox reaction to translocation of protons across the mitochondrial inner membrane, with protons being carried across the membrane as hydrogens on the quinol. In the process called Q cycle, 2 protons are consumed from the matrix, 4 protons are released into the intermembrane space and 2 electrons are passed to cytochrome c. The Rieske protein is a catalytic core subunit containing a [2Fe-2S] iron-sulfur cluster. It cycles between 2 conformational states during catalysis to transfer electrons from the quinol bound in the Q(0) site in cytochrome b (COB) to cytochrome c1 (CYT1). The protein is Cytochrome b-c1 complex subunit Rieske, mitochondrial (RIP1) of Saccharomyces cerevisiae (strain ATCC 204508 / S288c) (Baker's yeast).